Reading from the N-terminus, the 227-residue chain is Endo-1,4-beta-xylanase 1 (227 aa).

Residues 1–19 (MVSLKSVLAAATAVSSAIA) form the signal peptide. The region spanning 37-225 (QVTPNAEGWH…SSGESDIYVQ (189 aa)) is the GH11 domain. The Nucleophile role is filled by Glu-121. Catalysis depends on Glu-212, which acts as the Proton donor.

This sequence belongs to the glycosyl hydrolase 11 (cellulase G) family.

The catalysed reaction is Endohydrolysis of (1-&gt;4)-beta-D-xylosidic linkages in xylans.. It functions in the pathway glycan degradation; xylan degradation. This chain is Endo-1,4-beta-xylanase 1, found in Humicola insolens (Soft-rot fungus).